The primary structure comprises 206 residues: Putative type I restriction enzyme MpnIIP endonuclease subunit C-terminal part (206 aa).

Functionally, the C-terminal section of a putative type I restriction enzyme that if reconstituted might recognize 5'-GAN(7)TAY-3' and cleave a random distance away. Subunit R is required for both nuclease and ATPase activities, but not for modification. This is Putative type I restriction enzyme MpnIIP endonuclease subunit C-terminal part from Mycoplasma pneumoniae (strain ATCC 29342 / M129 / Subtype 1) (Mycoplasmoides pneumoniae).